The primary structure comprises 1165 residues: Integrin alpha-L (1165 aa).

The N-terminal stretch at 1-23 (MNSCIIVLRLLLSGPFVFAPAWS) is a signal peptide. Topologically, residues 24-1084 (YNLDVRHVQN…MKVDLVYEKE (1061 aa)) are extracellular. FG-GAP repeat units lie at residues 29–80 (RHVQ…DCLP) and 81–138 (VTLS…GPVL). An N-linked (GlcNAc...) asparagine glycan is attached at Asn-33. A disulfide bridge connects residues Cys-71 and Cys-78. A glycan (N-linked (GlcNAc...) asparagine) is linked at Asn-86. Cys-108 and Cys-126 are oxidised to a cystine. The region spanning 153–324 (DLVFLFDGSM…EKLKDLFTEL (172 aa)) is the VWFA domain. Asn-185 is a glycosylation site (N-linked (GlcNAc...) asparagine). FG-GAP repeat units follow at residues 335 to 386 (SKQD…SSTF), 387 to 442 (VGNE…GGPW), 443 to 503 (SQIQ…EFQM), 504 to 560 (VSEL…GLSP), and 564 to 624 (QRIE…FSPA). Ca(2+) is bound by residues Asp-465, Asp-467, Asp-469, Glu-473, Asp-527, Asn-529, Asp-531, Asp-535, Asp-587, Asp-591, and Asp-595. N-linked (GlcNAc...) asparagine glycans are attached at residues Asn-646, Asn-667, and Asn-723. Cys-650 and Cys-704 form a disulfide bridge. 2 disulfide bridges follow: Cys-768-Cys-774 and Cys-842-Cys-858. N-linked (GlcNAc...) asparagine glycosylation is found at Asn-859, Asn-894, and Asn-929. 2 cysteine pairs are disulfide-bonded: Cys-994–Cys-1009 and Cys-1017–Cys-1048. N-linked (GlcNAc...) asparagine glycans are attached at residues Asn-1056 and Asn-1067. The helical transmembrane segment at 1085–1105 (MLYLYVLSGIGGLLLLFLIFI) threads the bilayer. Residues 1106–1165 (ALYKVGFFKRNLKEKMEANVDASSEIPGEDAGQPELEKECKDPGCLEPLQKTDEDGSGGD) lie on the Cytoplasmic side of the membrane. The GFFKR motif signature appears at 1111–1115 (GFFKR). Positions 1123-1165 (ANVDASSEIPGEDAGQPELEKECKDPGCLEPLQKTDEDGSGGD) are disordered. Positions 1140–1159 (ELEKECKDPGCLEPLQKTDE) are enriched in basic and acidic residues.

Belongs to the integrin alpha chain family. As to quaternary structure, heterodimer of an alpha and a beta subunit. The ITGAL alpha subunit associates with the ITGB2 beta subunit. Interacts with THBD. Interacts with CD226. Post-translationally, in resting T-cells, up to 40% of surface ITGAL is constitutively phosphorylated. Phosphorylation causes conformational changes needed for ligand binding and is necessary for the activation by some physiological agents.

It is found in the cell membrane. Functionally, integrin ITGAL/ITGB2 is a receptor for ICAM1, ICAM2, ICAM3 and ICAM4. Integrin ITGAL/ITGB2 is a receptor for F11R. Integrin ITGAL/ITGB2 is a receptor for the secreted form of ubiquitin-like protein ISG15; the interaction is mediated by ITGAL. Involved in a variety of immune phenomena including leukocyte-endothelial cell interaction, cytotoxic T-cell mediated killing, and antibody dependent killing by granulocytes and monocytes. Contributes to natural killer cell cytotoxicity. Involved in leukocyte adhesion and transmigration of leukocytes including T-cells and neutrophils. Acts as a platform at the immunological synapse to translate TCR engagement and density of the ITGAL ligand ICAM1 into graded adhesion. Required for generation of common lymphoid progenitor cells in bone marrow, indicating the role in lymphopoiesis. Integrin ITGAL/ITGB2 in association with ICAM3, contributes to apoptotic neutrophil phagocytosis by macrophages. The polypeptide is Integrin alpha-L (Bos taurus (Bovine)).